Here is a 128-residue protein sequence, read N- to C-terminus: Fluoride-specific ion channel FluC (128 aa).

4 helical membrane-spanning segments follow: residues 5–25 (IVAIFVGAGLGALLRWFLSLA), 35–55 (LGTLASNLIGGYVIGVAAVVF), 67–87 (LFVITGFLGGLTTFSTYSVEV), and 96–116 (FGWALAVAALHLTGSFALTAL). Na(+) is bound by residues Gly75 and Thr78.

It belongs to the fluoride channel Fluc/FEX (TC 1.A.43) family.

Its subcellular location is the cell inner membrane. The catalysed reaction is fluoride(in) = fluoride(out). Na(+) is not transported, but it plays an essential structural role and its presence is essential for fluoride channel function. Functionally, fluoride-specific ion channel. Important for reducing fluoride concentration in the cell, thus reducing its toxicity. The protein is Fluoride-specific ion channel FluC of Burkholderia cenocepacia (strain HI2424).